The primary structure comprises 572 residues: Proline--tRNA ligase (572 aa).

The protein belongs to the class-II aminoacyl-tRNA synthetase family. ProS type 1 subfamily. In terms of assembly, homodimer.

It is found in the cytoplasm. It catalyses the reaction tRNA(Pro) + L-proline + ATP = L-prolyl-tRNA(Pro) + AMP + diphosphate. Functionally, catalyzes the attachment of proline to tRNA(Pro) in a two-step reaction: proline is first activated by ATP to form Pro-AMP and then transferred to the acceptor end of tRNA(Pro). As ProRS can inadvertently accommodate and process non-cognate amino acids such as alanine and cysteine, to avoid such errors it has two additional distinct editing activities against alanine. One activity is designated as 'pretransfer' editing and involves the tRNA(Pro)-independent hydrolysis of activated Ala-AMP. The other activity is designated 'posttransfer' editing and involves deacylation of mischarged Ala-tRNA(Pro). The misacylated Cys-tRNA(Pro) is not edited by ProRS. This chain is Proline--tRNA ligase, found in Salmonella dublin (strain CT_02021853).